Consider the following 588-residue polypeptide: Schlafen family member 12-like (588 aa).

A helical transmembrane segment spans residues 566–586 (IFLFVCLFRFCLFVCWFVCFF).

This sequence belongs to the Schlafen family.

The protein localises to the membrane. This chain is Schlafen family member 12-like (SLFN12L), found in Homo sapiens (Human).